A 349-amino-acid chain; its full sequence is S-adenosylmethionine:tRNA ribosyltransferase-isomerase (349 aa).

This sequence belongs to the QueA family. In terms of assembly, monomer.

The protein localises to the cytoplasm. The catalysed reaction is 7-aminomethyl-7-carbaguanosine(34) in tRNA + S-adenosyl-L-methionine = epoxyqueuosine(34) in tRNA + adenine + L-methionine + 2 H(+). The protein operates within tRNA modification; tRNA-queuosine biosynthesis. Transfers and isomerizes the ribose moiety from AdoMet to the 7-aminomethyl group of 7-deazaguanine (preQ1-tRNA) to give epoxyqueuosine (oQ-tRNA). This is S-adenosylmethionine:tRNA ribosyltransferase-isomerase from Pseudomonas entomophila (strain L48).